The sequence spans 930 residues: Isoleucine--tRNA ligase (930 aa).

A 'HIGH' region motif is present at residues 57-67; that stretch reads PYANGHIHLGT. Glu-559 contacts L-isoleucyl-5'-AMP. Residues 600–604 carry the 'KMSKS' region motif; sequence KMSKS. Residue Lys-603 coordinates ATP. Zn(2+) contacts are provided by Cys-899, Cys-902, Cys-918, and Cys-921.

The protein belongs to the class-I aminoacyl-tRNA synthetase family. IleS type 1 subfamily. In terms of assembly, monomer. It depends on Zn(2+) as a cofactor.

Its subcellular location is the cytoplasm. The enzyme catalyses tRNA(Ile) + L-isoleucine + ATP = L-isoleucyl-tRNA(Ile) + AMP + diphosphate. In terms of biological role, catalyzes the attachment of isoleucine to tRNA(Ile). As IleRS can inadvertently accommodate and process structurally similar amino acids such as valine, to avoid such errors it has two additional distinct tRNA(Ile)-dependent editing activities. One activity is designated as 'pretransfer' editing and involves the hydrolysis of activated Val-AMP. The other activity is designated 'posttransfer' editing and involves deacylation of mischarged Val-tRNA(Ile). The protein is Isoleucine--tRNA ligase of Desulforudis audaxviator (strain MP104C).